A 428-amino-acid chain; its full sequence is Cyclic AMP-responsive element-binding protein 3-like protein 3-A (428 aa).

Over Met1 to Gln286 the chain is Cytoplasmic. A compositionally biased stretch (low complexity) spans Val67–Ser83. The tract at residues Val67–Pro104 is disordered. Residues Ser93 to Glu103 are compositionally biased toward pro residues. The region spanning Ile210–Leu273 is the bZIP domain. The segment at Lys212–Arg241 is basic motif. Positions Leu252–Leu273 are leucine-zipper. Residues Ala287–Leu303 traverse the membrane as a helical; Signal-anchor for type II membrane protein segment. Topologically, residues Pro304–Met428 are lumenal. The disordered stretch occupies residues Thr381 to Met428. Positions Pro385–Asp402 are enriched in basic and acidic residues. Asn389 carries an N-linked (GlcNAc...) asparagine glycan.

This sequence belongs to the bZIP family. ATF subfamily. As to quaternary structure, binds DNA as a dimer. Post-translationally, controlled by regulated intramembrane proteolysis (RIP). A fragment containing the cytoplasmic transcription factor domain is released by proteolysis. The cleavage seems to be performed sequentially by site-1 and site-2 proteases.

Its subcellular location is the endoplasmic reticulum membrane. It localises to the nucleus. In terms of biological role, transcriptional activator. Binds the cAMP response element (CRE). Activates transcription through box-B element and CRE. Seems to function synergistically with atf6. Regulates FGF21 transcription. The chain is Cyclic AMP-responsive element-binding protein 3-like protein 3-A (creb3l3a) from Danio rerio (Zebrafish).